A 198-amino-acid chain; its full sequence is Ribonuclease HII 1 (198 aa).

The region spanning 7-196 is the RNase H type-2 domain; it reads ELTAGVDEAG…VRAALARAAA (190 aa). A divalent metal cation is bound by residues aspartate 13, glutamate 14, and aspartate 105.

Belongs to the RNase HII family. It depends on Mn(2+) as a cofactor. Requires Mg(2+) as cofactor.

It localises to the cytoplasm. The enzyme catalyses Endonucleolytic cleavage to 5'-phosphomonoester.. Functionally, endonuclease that specifically degrades the RNA of RNA-DNA hybrids. In Methylibium petroleiphilum (strain ATCC BAA-1232 / LMG 22953 / PM1), this protein is Ribonuclease HII 1.